Reading from the N-terminus, the 120-residue chain is Small ribosomal subunit protein uS13 (120 aa).

A disordered region spans residues 92–120 (HRKGLPVRGQTTKNNARTRKGKKKTVGSK). Basic residues predominate over residues 107–120 (ARTRKGKKKTVGSK).

This sequence belongs to the universal ribosomal protein uS13 family. In terms of assembly, part of the 30S ribosomal subunit. Forms a loose heterodimer with protein S19. Forms two bridges to the 50S subunit in the 70S ribosome.

Located at the top of the head of the 30S subunit, it contacts several helices of the 16S rRNA. In the 70S ribosome it contacts the 23S rRNA (bridge B1a) and protein L5 of the 50S subunit (bridge B1b), connecting the 2 subunits; these bridges are implicated in subunit movement. Contacts the tRNAs in the A and P-sites. The protein is Small ribosomal subunit protein uS13 of Helicobacter pylori (strain J99 / ATCC 700824) (Campylobacter pylori J99).